Consider the following 146-residue polypeptide: Anti-sigma F factor (146 aa).

This sequence belongs to the anti-sigma-factor family.

It catalyses the reaction L-seryl-[protein] + ATP = O-phospho-L-seryl-[protein] + ADP + H(+). It carries out the reaction L-threonyl-[protein] + ATP = O-phospho-L-threonyl-[protein] + ADP + H(+). In terms of biological role, binds to sigma F and blocks its ability to form an RNA polymerase holoenzyme (E-sigma F). Phosphorylates SpoIIAA on a serine residue. This phosphorylation may enable SpoIIAA to act as an anti-anti-sigma factor that counteracts SpoIIAB and thus releases sigma F from inhibition. This Bacillus anthracis (strain A0248) protein is Anti-sigma F factor.